The primary structure comprises 213 residues: Imidazole glycerol phosphate synthase subunit HisH 1 (213 aa).

The Glutamine amidotransferase type-1 domain occupies 3–213 (SVSILDYGVG…LSIIQQFLQI (211 aa)). Catalysis depends on Cys-81, which acts as the Nucleophile. Residues His-195 and Glu-197 contribute to the active site.

In terms of assembly, heterodimer of HisH and HisF.

The protein localises to the cytoplasm. It carries out the reaction 5-[(5-phospho-1-deoxy-D-ribulos-1-ylimino)methylamino]-1-(5-phospho-beta-D-ribosyl)imidazole-4-carboxamide + L-glutamine = D-erythro-1-(imidazol-4-yl)glycerol 3-phosphate + 5-amino-1-(5-phospho-beta-D-ribosyl)imidazole-4-carboxamide + L-glutamate + H(+). The enzyme catalyses L-glutamine + H2O = L-glutamate + NH4(+). It participates in amino-acid biosynthesis; L-histidine biosynthesis; L-histidine from 5-phospho-alpha-D-ribose 1-diphosphate: step 5/9. In terms of biological role, IGPS catalyzes the conversion of PRFAR and glutamine to IGP, AICAR and glutamate. The HisH subunit provides the glutamine amidotransferase activity that produces the ammonia necessary to HisF for the synthesis of IGP and AICAR. The sequence is that of Imidazole glycerol phosphate synthase subunit HisH 1 from Legionella pneumophila (strain Lens).